The primary structure comprises 780 residues: Vacuolar protein sorting-associated protein 51 homolog (780 aa).

Ala-2 is modified (N-acetylalanine). 2 disordered regions span residues 270–292 (STLVEDDDSSNDTESNDQHPAKI) and 615–651 (QGTFRKHKRTDSNGSNTTTSSRSNTLHNDKMARSNSQ). A compositionally biased stretch (acidic residues) spans 273-284 (VEDDDSSNDTES). Low complexity predominate over residues 626-639 (SNGSNTTTSSRSNT).

This sequence belongs to the VPS51 family. In terms of assembly, component of the Golgi-associated retrograde protein (GARP) complex, composed by VPS51, VPS52, VPS53 and VPS54. Component of the endosome-associated retrograde protein (EARP) complex, composed of VPS51, VPS52, VPS53 and VPS50. Interacts with VPS52. Expressed in primary and lateral roots, shoots of seedlings and flowers.

It localises to the golgi apparatus. The protein localises to the trans-Golgi network. Its subcellular location is the recycling endosome. The protein resides in the prevacuolar compartment. In terms of biological role, acts as a component of the GARP complex that is involved in retrograde transport from early and late endosomes to the trans-Golgi network (TGN). The GARP complex is required for the maintenance of protein retrieval from endosomes to the TGN, acid hydrolase sorting, lysosome function, endosomal cholesterol traffic and autophagy. VPS51 participates in retrograde transport of acid hydrolase receptors, likely by promoting tethering and SNARE-dependent fusion of endosome-derived carriers to the TGN. Acts as a component of the EARP complex that is involved in endocytic recycling. The EARP complex associates with Rab4-positive endosomes and promotes recycling of internalized transferrin receptor (TFRC) to the plasma membrane. Required for vacuolar targeting and cellular trafficking. Involved in the regulation of vascular tissue patterning, probably by regulating PIN1 expression pattern, thus modulating auxin flux. Important to prevent PIN1 accumulation within margin cells, possibly by targeting PIN1 to the lytic vacuole. Regulates PIN1 and ATHB8 expression pattern in secondary veins. This chain is Vacuolar protein sorting-associated protein 51 homolog, found in Arabidopsis thaliana (Mouse-ear cress).